A 154-amino-acid polypeptide reads, in one-letter code: Large ribosomal subunit protein uL30 (154 aa).

The segment at 114 to 146 (PTLRLHPPRGGHDGVKHPVKEGGQLGKHDTEGI) is disordered. Residues 123–144 (GGHDGVKHPVKEGGQLGKHDTE) are compositionally biased toward basic and acidic residues.

Belongs to the universal ribosomal protein uL30 family. Part of the 50S ribosomal subunit. Binds 5S rRNA.

In terms of biological role, this is one of 5 proteins that mediate the attachment of the 5S rRNA onto the large ribosomal subunit, stabilizing the orientation of adjacent RNA domains. This Haloarcula marismortui (strain ATCC 43049 / DSM 3752 / JCM 8966 / VKM B-1809) (Halobacterium marismortui) protein is Large ribosomal subunit protein uL30.